Reading from the N-terminus, the 430-residue chain is Serine--tRNA ligase (430 aa).

237-239 (TAE) serves as a coordination point for L-serine. 268-270 (RSE) contacts ATP. Position 291 (Glu-291) interacts with L-serine. An ATP-binding site is contributed by 355–358 (EISS). L-serine is bound at residue Ser-391.

Belongs to the class-II aminoacyl-tRNA synthetase family. Type-1 seryl-tRNA synthetase subfamily. In terms of assembly, homodimer. The tRNA molecule binds across the dimer.

It localises to the cytoplasm. The catalysed reaction is tRNA(Ser) + L-serine + ATP = L-seryl-tRNA(Ser) + AMP + diphosphate + H(+). It carries out the reaction tRNA(Sec) + L-serine + ATP = L-seryl-tRNA(Sec) + AMP + diphosphate + H(+). Its pathway is aminoacyl-tRNA biosynthesis; selenocysteinyl-tRNA(Sec) biosynthesis; L-seryl-tRNA(Sec) from L-serine and tRNA(Sec): step 1/1. Functionally, catalyzes the attachment of serine to tRNA(Ser). Is also able to aminoacylate tRNA(Sec) with serine, to form the misacylated tRNA L-seryl-tRNA(Sec), which will be further converted into selenocysteinyl-tRNA(Sec). The protein is Serine--tRNA ligase of Escherichia fergusonii (strain ATCC 35469 / DSM 13698 / CCUG 18766 / IAM 14443 / JCM 21226 / LMG 7866 / NBRC 102419 / NCTC 12128 / CDC 0568-73).